We begin with the raw amino-acid sequence, 264 residues long: Cell cycle regulator CcrZ (264 aa).

Residues Phe32, Trp70, and Gly73 each coordinate ATP. A Brenner's motif [HXDhX3N] motif is present at residues 157–164 (HGDVRHSN). Asp159 functions as the Proton acceptor in the catalytic mechanism. Positions 173–196 (IYLVDWDSVRLTDRMFDVAHMLCH) match the APH motif.

It belongs to the aminoglycoside phosphotransferase family. As to quaternary structure, monomer in solution. Interacts with DnaA (via domains I (1-82) and III (111-326)). Interacts with DnaB. Interacts with FtsZ; the interaction is direct and ensures correct localization during the cell cycle.

The protein resides in the cytoplasm. The catalysed reaction is D-ribose + ATP = D-ribose 5-phosphate + ADP + H(+). It carries out the reaction 2-deoxy-D-ribose + ATP = 2-deoxy-D-ribose 5-phosphate + ADP + H(+). Plays a role in cell cycle regulation and chromosome integrity. Activates DnaA-dependent chromosomal DNA replication initiation ensuring that the chromosome is replicated at the right time during the cell cycle. May regulate replication initiation through phosphorylation of a possible second messenger or metabolite, and by interacting with replication initiation proteins. Has ATPase activity with D-ribose and 2-deoxy-D-ribose in vitro, but not with choline. Involved in DNA damage response. In Streptococcus pneumoniae serotype 2 (strain D39 / NCTC 7466), this protein is Cell cycle regulator CcrZ.